The primary structure comprises 131 residues: Small ribosomal subunit protein uS12 (131 aa).

3-methylthioaspartic acid is present on D89.

This sequence belongs to the universal ribosomal protein uS12 family. In terms of assembly, part of the 30S ribosomal subunit. Contacts proteins S8 and S17. May interact with IF1 in the 30S initiation complex.

In terms of biological role, with S4 and S5 plays an important role in translational accuracy. Its function is as follows. Interacts with and stabilizes bases of the 16S rRNA that are involved in tRNA selection in the A site and with the mRNA backbone. Located at the interface of the 30S and 50S subunits, it traverses the body of the 30S subunit contacting proteins on the other side and probably holding the rRNA structure together. The combined cluster of proteins S8, S12 and S17 appears to hold together the shoulder and platform of the 30S subunit. In Campylobacter concisus (strain 13826), this protein is Small ribosomal subunit protein uS12.